The primary structure comprises 741 residues: Eukaryotic peptide chain release factor GTP-binding subunit (741 aa).

The segment at 5-135 (QQQQQQFNAN…SYNNNNNYNN (131 aa)) is several sort of repeats. Residues 59 to 161 (QQFGQYGQQQ…DQQQETGSGQ (103 aa)) are compositionally biased toward low complexity. Disordered stretches follow at residues 59–186 (QQFG…KKVL) and 199–264 (IVTK…KTEA). Residues 162 to 311 (MSLEDYQKQQ…EQIDASIVND (150 aa)) are charged. Composition is skewed to basic and acidic residues over residues 166–175 (DYQKQQKESL) and 202–241 (KKKE…ESKV). One can recognise a tr-type G domain in the interval 316–541 (KDHMSIIFMG…YLDSMPLAVR (226 aa)). Residues 325 to 332 (GHVDAGKS) form a G1 region. 325-332 (GHVDAGKS) contributes to the GTP binding site. A G2 region spans residues 381–385 (GKTIE). T399 carries the post-translational modification Phosphothreonine. A G3 region spans residues 402 to 405 (DAPG). GTP-binding positions include 402 to 406 (DAPGH) and 464 to 467 (NKMD). Positions 464–467 (NKMD) are G4. A G5 region spans residues 505–507 (SGY).

It belongs to the TRAFAC class translation factor GTPase superfamily. Classic translation factor GTPase family. ERF3 subfamily.

It is found in the cytoplasm. In terms of biological role, involved in translation termination. Stimulates the activity of ERF1. Binds guanine nucleotides. The protein is Eukaryotic peptide chain release factor GTP-binding subunit (SUP2) of Ogataea pini (Yeast).